The following is a 1011-amino-acid chain: CRM-domain containing factor CFM2, chloroplastic (1011 aa).

The N-terminal 45 residues, 1-45, are a transit peptide targeting the chloroplast; sequence MLLPLFHQQPLILAKTFPDRIFPPFLVPNTLVSRRNVSRANSGIF. Residues 77-90 show a composition bias toward basic and acidic residues; the sequence is HDSPTRRITGEESG. The tract at residues 77–96 is disordered; sequence HDSPTRRITGEESGKNSPGE. CRM domains are found at residues 164–260, 376–473, and 577–677; these read LTLP…YFVS, PKLT…AVSS, and EGIT…QCLR. Disordered regions lie at residues 721–810 and 841–872; these read DSAT…GNSL and LNANRKLPGSSTGSGSQISALRERKSENDGLV. Polar residues predominate over residues 722–736; it reads SATNETWSDGESSNM. Basic and acidic residues predominate over residues 743 to 757; that stretch reads ENQHTEPEKAREKIE. Residues 762–771 are compositionally biased toward polar residues; that stretch reads SDLSVPSSGE. The span at 772-782 shows a compositional bias: acidic residues; the sequence is ENWEDDSEGEV. Residues 849–859 are compositionally biased toward polar residues; sequence GSSTGSGSQIS. Residues 873–972 form the CRM 4 domain; sequence TDLSNRERLI…WGAEEEMKSF (100 aa).

As to quaternary structure, interacts with RNA. Part of large ribonucleo-protein particles that contain CAF1 and/or CAF2.

It localises to the plastid. It is found in the chloroplast stroma. In terms of biological role, binds specific group II introns in chloroplasts and facilitates their splicing. Acts on both subgroup IIA and subgroup IIB introns. The substrates of the subgroup IIB also require the CRM domain proteins CAF1 or CAF2, with a simultaneous binding of CFM2 and CAF1 or CAF2. Can bind to and promote the splicing of the single group I intron in chloroplast tRNA transcript of trnL-UAA gene. The polypeptide is CRM-domain containing factor CFM2, chloroplastic (Arabidopsis thaliana (Mouse-ear cress)).